The sequence spans 336 residues: Mediator of RNA polymerase II transcription subunit 4 (336 aa).

Disordered regions lie at residues methionine 1 to valine 45 and asparagine 59 to alanine 85. Positions glutamine 154 to glutamine 192 form a coiled coil. Residues proline 281–aspartate 336 form a disordered region. Acidic residues predominate over residues isoleucine 325–aspartate 336.

Belongs to the Mediator complex subunit 4 family. As to quaternary structure, component of the Mediator complex.

It localises to the nucleus. Functionally, component of the Mediator complex, a coactivator involved in the regulated transcription of nearly all RNA polymerase II-dependent genes. Mediator functions as a bridge to convey information from gene-specific regulatory proteins to the basal RNA polymerase II transcription machinery. Mediator is recruited to promoters by direct interactions with regulatory proteins and serves as a scaffold for the assembly of a functional preinitiation complex with RNA polymerase II and the general transcription factors. In Yarrowia lipolytica (strain CLIB 122 / E 150) (Yeast), this protein is Mediator of RNA polymerase II transcription subunit 4 (MED4).